A 289-amino-acid chain; its full sequence is Acetylglutamate kinase (289 aa).

Residues 60–61 (GG), R82, and N182 contribute to the substrate site.

Belongs to the acetylglutamate kinase family. ArgB subfamily.

The protein resides in the cytoplasm. The catalysed reaction is N-acetyl-L-glutamate + ATP = N-acetyl-L-glutamyl 5-phosphate + ADP. The protein operates within amino-acid biosynthesis; L-arginine biosynthesis; N(2)-acetyl-L-ornithine from L-glutamate: step 2/4. Catalyzes the ATP-dependent phosphorylation of N-acetyl-L-glutamate. The chain is Acetylglutamate kinase from Methanothrix thermoacetophila (strain DSM 6194 / JCM 14653 / NBRC 101360 / PT) (Methanosaeta thermophila).